The sequence spans 503 residues: Cytochrome P450 11B1, mitochondrial (503 aa).

The transit peptide at 1-24 (MALRAKAEVCMAAPWLSLQRARAL) directs the protein to the mitochondrion. Residue C450 participates in heme binding.

It belongs to the cytochrome P450 family. Requires heme as cofactor.

The protein localises to the mitochondrion inner membrane. The enzyme catalyses a steroid + 2 reduced [adrenodoxin] + O2 + 2 H(+) = an 11beta-hydroxysteroid + 2 oxidized [adrenodoxin] + H2O. It catalyses the reaction 11-deoxycortisol + 2 reduced [adrenodoxin] + O2 + 2 H(+) = cortisol + 2 oxidized [adrenodoxin] + H2O. It carries out the reaction 21-hydroxyprogesterone + 2 reduced [adrenodoxin] + O2 + 2 H(+) = corticosterone + 2 oxidized [adrenodoxin] + H2O. The catalysed reaction is 21-hydroxyprogesterone + 2 reduced [adrenodoxin] + O2 + 2 H(+) = 18-hydroxy-11-deoxycorticosterone + 2 oxidized [adrenodoxin] + H2O. The enzyme catalyses 21-hydroxyprogesterone + 2 reduced [adrenodoxin] + O2 + 2 H(+) = 19-hydroxy-11-deoxycorticosterone + 2 oxidized [adrenodoxin] + H2O. It catalyses the reaction cortisol + 2 reduced [adrenodoxin] + O2 + 2 H(+) = 18-hydroxycortisol + 2 oxidized [adrenodoxin] + H2O. It carries out the reaction 11-deoxycortisol + 2 reduced [adrenodoxin] + O2 + 2 H(+) = 18-hydroxy-11-deoxycortisol + 2 oxidized [adrenodoxin] + H2O. It functions in the pathway steroid biosynthesis; glucocorticoid biosynthesis. The protein operates within steroid hormone biosynthesis. Its function is as follows. A cytochrome P450 monooxygenase involved in the biosynthesis of adrenal corticoids. Catalyzes a variety of reactions that are essential for many species, including detoxification, defense, and the formation of endogenous chemicals like steroid hormones. Steroid 11beta, 18- and 19-hydroxylase with preferred regioselectivity at 11beta, then 18, and lastly 19. Catalyzes the hydroxylation of 11-deoxycortisol and 11-deoxycorticosterone (21-hydroxyprogesterone) at 11beta position, yielding cortisol or corticosterone, respectively, but cannot produce aldosterone. Mechanistically, uses molecular oxygen inserting one oxygen atom into a substrate for hydroxylation and reducing the second into a water molecule. Two electrons are provided by NADPH via a two-protein mitochondrial transfer system comprising flavoprotein FDXR (adrenodoxin/ferredoxin reductase) and nonheme iron-sulfur protein FDX1 or FDX2 (adrenodoxin/ferredoxin). Due to its lack of 18-oxidation activity, it is incapable of generating aldosterone. Could also be involved in the androgen metabolic pathway. The chain is Cytochrome P450 11B1, mitochondrial (CYP11B1) from Papio hamadryas ursinus (Chacma baboon).